Here is a 332-residue protein sequence, read N- to C-terminus: DNA-directed RNA polymerase subunit alpha (332 aa).

Residues 1 to 226 (MLIAQRPTLT…ELFGLCRELN (226 aa)) are alpha N-terminal domain (alpha-NTD). The segment at 245 to 332 (PEMNIPIEDL…GGTFFSPEDE (88 aa)) is alpha C-terminal domain (alpha-CTD).

This sequence belongs to the RNA polymerase alpha chain family. As to quaternary structure, homodimer. The RNAP catalytic core consists of 2 alpha, 1 beta, 1 beta' and 1 omega subunit. When a sigma factor is associated with the core the holoenzyme is formed, which can initiate transcription.

The catalysed reaction is RNA(n) + a ribonucleoside 5'-triphosphate = RNA(n+1) + diphosphate. Its function is as follows. DNA-dependent RNA polymerase catalyzes the transcription of DNA into RNA using the four ribonucleoside triphosphates as substrates. The chain is DNA-directed RNA polymerase subunit alpha from Bifidobacterium adolescentis (strain ATCC 15703 / DSM 20083 / NCTC 11814 / E194a).